We begin with the raw amino-acid sequence, 355 residues long: Protein-glutamate methylesterase/protein-glutamine glutaminase 3 (355 aa).

Residues 5–122 (KVLIVDDSAV…KQFLEESRVR (118 aa)) enclose the Response regulatory domain. 4-aspartylphosphate is present on Asp-56. The CheB-type methylesterase domain maps to 165–355 (IQTTEKVVVV…IAREVLRLCG (191 aa)). Residues Ser-177, His-203, and Asp-299 contribute to the active site.

It belongs to the CheB family. In terms of processing, phosphorylated by CheA. Phosphorylation of the N-terminal regulatory domain activates the methylesterase activity.

The protein localises to the cytoplasm. It catalyses the reaction [protein]-L-glutamate 5-O-methyl ester + H2O = L-glutamyl-[protein] + methanol + H(+). It carries out the reaction L-glutaminyl-[protein] + H2O = L-glutamyl-[protein] + NH4(+). Functionally, involved in chemotaxis. Part of a chemotaxis signal transduction system that modulates chemotaxis in response to various stimuli. Catalyzes the demethylation of specific methylglutamate residues introduced into the chemoreceptors (methyl-accepting chemotaxis proteins or MCP) by CheR. Also mediates the irreversible deamidation of specific glutamine residues to glutamic acid. This is Protein-glutamate methylesterase/protein-glutamine glutaminase 3 from Geobacter metallireducens (strain ATCC 53774 / DSM 7210 / GS-15).